A 305-amino-acid chain; its full sequence is Glutaminase (305 aa).

Residues Ser-61, Asn-113, Glu-158, Asn-165, Tyr-189, Tyr-241, and Val-259 each contribute to the substrate site.

It belongs to the glutaminase family. As to quaternary structure, homotetramer.

It catalyses the reaction L-glutamine + H2O = L-glutamate + NH4(+). The protein is Glutaminase of Clostridium botulinum (strain 657 / Type Ba4).